We begin with the raw amino-acid sequence, 459 residues long: Taurine--pyruvate aminotransferase (459 aa).

Lys287 is modified (N6-(pyridoxal phosphate)lysine).

It belongs to the class-III pyridoxal-phosphate-dependent aminotransferase family. Requires pyridoxal 5'-phosphate as cofactor.

It localises to the cytoplasm. The catalysed reaction is taurine + pyruvate = sulfoacetaldehyde + L-alanine. The protein operates within organosulfur degradation; taurine degradation via aerobic pathway; acetyl phosphate and sulfite from taurine: step 1/2. In terms of biological role, catalyzes the degradation of taurine into alanine and sulfoacetaldehyde. In Rhodobacter capsulatus (strain ATCC BAA-309 / NBRC 16581 / SB1003), this protein is Taurine--pyruvate aminotransferase.